The sequence spans 428 residues: E3 ubiquitin-protein ligase RNF128 (428 aa).

An N-terminal signal peptide occupies residues 1–38 (MGPPPGIGVYCRGGCGAARLLAWCFLLALSPHAPGSRG). N48, N59, and N101 each carry an N-linked (GlcNAc...) asparagine glycan. Residues 75–183 (SPLEPVSGVL…LKGTKILQSI (109 aa)) form the PA domain. Residues 208 to 228 (IFFVSVSFFIITAATVGYFIF) form a helical membrane-spanning segment. The segment at 277-318 (CAVCIELYKPNDLVRILTCNHIFHKTCVDPWLLEHRTCPMCK) adopts an RING-type; atypical zinc-finger fold. The span at 342-351 (VSNEASNTAS) shows a compositional bias: polar residues. The disordered stretch occupies residues 342–428 (VSNEASNTAS…QEAAVREIKS (87 aa)).

Post-translationally, auto-ubiquitinated. Controls the development of T-cell clonal anergy by ubiquitination. In terms of tissue distribution, expressed in brain, kidney, heart, liver, ovary, testis and thymus. Expression increased as early as 4 hours by 5- to 7-fold in anergized cultures as compared to resting or activated cells.

The protein resides in the cytoplasm. Its subcellular location is the endomembrane system. It is found in the cytoskeleton. It localises to the perinuclear region. The catalysed reaction is S-ubiquitinyl-[E2 ubiquitin-conjugating enzyme]-L-cysteine + [acceptor protein]-L-lysine = [E2 ubiquitin-conjugating enzyme]-L-cysteine + N(6)-ubiquitinyl-[acceptor protein]-L-lysine.. Its pathway is protein modification; protein ubiquitination. In terms of biological role, E3 ubiquitin-protein ligase that catalyzes 'Lys-27', 'Lys-48'- or 'Lys-63'-linked polyubiquitin chains formation and plays a role in different biological processes such as modulation of immune response, cytoskeletal dynamics or protein homeostasis. Inhibits IL2 and IL4 transcription, thereby playing an important role in the induction of the anergic phenotype, a long-term stable state of T-lymphocyte unresponsiveness to antigenic stimulation associated with the blockade of interleukin production. Ubiquitinates ARPC5 with 'Lys-48' linkages and COR1A with 'Lys-63' linkages leading to their degradation, down-regulation of these cytoskeletal components results in impaired lamellipodium formation and reduced accumulation of F-actin at the immunological synapse. Functions in the patterning of the dorsal ectoderm; sensitizes ectoderm to respond to neural-inducing signals. Plays a positive role in innate immune response by promoting 'Lys-63'-linked ubiquitination of TBK1 after RNA- or DNA-virus infection. Regulates alveolar macrophage activation and neutrophil infiltration by interacting with TLR4, targeting it for degradation, and inhibiting NF-kappa-B activation, hence decreasing pro-inflammatory cytokines. Negatively regulates the IL-3/STAT5 signaling pathway by facilitating 'Lys-27'-linked polyubiquitination of IL3RA leading to its degradation via lysosomal pathway. Directly regulates the N-glycosylation process in the endoplasmic reticulum by targeting the glycosyl-transferase RPN1 for ubiquitination and degradation. Other substrates targeted for degradation by RNF128 include transmembrane proteins CD40L, CD83 or the tetraspanin CD151. This chain is E3 ubiquitin-protein ligase RNF128 (Rnf128), found in Mus musculus (Mouse).